The primary structure comprises 648 residues: Acyl-CoA-binding domain-containing protein 5 (648 aa).

Positions 13–107 (YPERFYAAAS…LEEADPGWYP (95 aa)) constitute an ACB domain. An acyl-CoA-binding positions include Lys-34, 49–53 (YTLHQ), and Lys-75. 6 Kelch repeats span residues 196–244 (KMYM…KLTH), 256–306 (QLLS…LVGK), 307–357 (SLVI…VHAE), 359–408 (YLLI…TIGE), 409–457 (NWYI…LVVS), and 464–509 (IVVA…AVNN). Position 517 is a phosphoserine (Ser-517). A coiled-coil region spans residues 520 to 632 (KVEGKADRII…AATMNAKRQS (113 aa)). Residues 625-634 (TMNAKRQSSG) are compositionally biased toward polar residues. The disordered stretch occupies residues 625 to 648 (TMNAKRQSSGGVWGWLAGTPPPKT).

It belongs to the ACBP family. As to expression, expressed in roots, stems, leaves, flowers and siliques.

It is found in the cytoplasm. In terms of biological role, binds medium- and long-chain acyl-CoA esters with very high affinity. Can interact in vitro with oleoyl-CoA, barely with palmitoyl-CoA, but not with arachidonyl-CoA. May function as an intracellular carrier of acyl-CoA esters. The chain is Acyl-CoA-binding domain-containing protein 5 (ACBP5) from Arabidopsis thaliana (Mouse-ear cress).